The sequence spans 100 residues: Small ribosomal subunit protein uS14c (100 aa).

This sequence belongs to the universal ribosomal protein uS14 family. As to quaternary structure, part of the 30S ribosomal subunit.

It is found in the plastid. The protein localises to the chloroplast. Functionally, binds 16S rRNA, required for the assembly of 30S particles. The sequence is that of Small ribosomal subunit protein uS14c from Ceratophyllum demersum (Rigid hornwort).